The following is a 187-amino-acid chain: Adenylate kinase (187 aa).

10–15 (GSGKGT) contacts ATP. The tract at residues 30-59 (STGDLLRSEVVAGTPLGLQAKQVMAQGDLV) is NMP. AMP-binding positions include T31, R36, 57–59 (DLV), 85–88 (GYPR), and Q92. Positions 126-136 (GRAQAEGREDD) are LID. R127 contributes to the ATP binding site. Residues R133 and R144 each contribute to the AMP site. Residue G172 coordinates ATP.

This sequence belongs to the adenylate kinase family. In terms of assembly, monomer.

It is found in the cytoplasm. The enzyme catalyses AMP + ATP = 2 ADP. The protein operates within purine metabolism; AMP biosynthesis via salvage pathway; AMP from ADP: step 1/1. Its function is as follows. Catalyzes the reversible transfer of the terminal phosphate group between ATP and AMP. Plays an important role in cellular energy homeostasis and in adenine nucleotide metabolism. This chain is Adenylate kinase, found in Xylella fastidiosa (strain M23).